Consider the following 211-residue polypeptide: RING finger protein 222 (211 aa).

Residues 14–65 (CPVCYEKFRDLDGASRTLSCGHVFCHDCLVKYLLSTRVDGQVQRTIVCPICR) form an RING-type zinc finger. A helical membrane pass occupies residues 187 to 207 (LITLIAVVAVVAAILPWVLLV).

Its subcellular location is the membrane. In Mus musculus (Mouse), this protein is RING finger protein 222 (Rnf222).